The chain runs to 245 residues: MALETLNSPTATTTARPLLRYREEMEPENLEQWAKRKRTKRQRFDHGHQNQETNKNLPSEEEYLALCLLMLARGSAVQSPPLPPLPSRASPSDHRDYKCTVCGKSFSSYQALGGHKTSHRKPTNTSITSGNQELSNNSHSNSGSVVINVTVNTGNGVSQSGKIHTCSICFKSFASGQALGGHKRCHYDGGNNGNGNGSSSNSVELVAGSDVSDVDNERWSEESAIGGHRGFDLNLPADQVSVTTS.

Residues Met1–Ala15 show a composition bias toward polar residues. Disordered regions lie at residues Met1–Leu57 and Leu112–Asn141. The segment at Tyr97–His119 adopts a C2H2-type 1 zinc-finger fold. Residues Thr123–Leu134 are compositionally biased toward polar residues. The segment at His164–His186 adopts a C2H2-type 2 zinc-finger fold. Residues Gly193–Phe231 form a disordered region.

Highly expressed in roots and at lower levels in leaves and stems.

It is found in the nucleus. Transcriptional repressor involved in the inhibition of plant growth under abiotic stress conditions. Can repress the expression of various genes, including osmotic stress and abscisic acid-repressive genes and auxin-inducible genes, by binding to their promoter regions in a DNA sequence-specific manner. This chain is Zinc finger protein AZF1 (AZF1), found in Arabidopsis thaliana (Mouse-ear cress).